The primary structure comprises 413 residues: Putative syntaxin-5 (413 aa).

The Cytoplasmic segment spans residues 1-391 (MSDFHNIRSR…RYLQNISKNR (391 aa)). Positions 257–290 (KNRRDKFSSGAAVPMGLPSSSSGANVRSKLLQDD) are disordered. The t-SNARE coiled-coil homology domain maps to 321-383 (LEYAQARSNT…DMAHSELVRY (63 aa)). The helical; Anchor for type IV membrane protein transmembrane segment at 392–412 (WLMIQVFGVLMVFFVVFVLFL) threads the bilayer. Thr413 is a topological domain (extracellular).

The protein belongs to the syntaxin family.

It is found in the membrane. Potentially involved in docking of synaptic vesicles at presynaptic active zones. The sequence is that of Putative syntaxin-5 (syx-5) from Caenorhabditis elegans.